Here is a 164-residue protein sequence, read N- to C-terminus: UPF0178 protein RPB_3201 (164 aa).

The protein belongs to the UPF0178 family.

The chain is UPF0178 protein RPB_3201 from Rhodopseudomonas palustris (strain HaA2).